Reading from the N-terminus, the 821-residue chain is G-type lectin S-receptor-like serine/threonine-protein kinase SD2-5 (821 aa).

The N-terminal stretch at 1 to 21 (MRGVFIVIVTCLVFLPDPLRA) is a signal peptide. Residues 22–429 (GVASIGSITP…NGEDDGKHFP (408 aa)) are Extracellular-facing. Residues 33–148 (FGGSQMNYIN…DGTSIWESFD (116 aa)) enclose the Bulb-type lectin domain. N-linked (GlcNAc...) asparagine glycosylation is found at Asn51, Asn121, Asn174, and Asn248. The region spanning 280 to 314 (PSDLCGTPEPCGPYYVCSGSKVCGCVSGLSRARSD) is the EGF-like; atypical domain. 2 disulfide bridges follow: Cys284–Cys296 and Cys290–Cys302. The region spanning 323 to 411 (CKKTKDNATL…SGFVSYIKIA (89 aa)) is the PAN domain. 3 N-linked (GlcNAc...) asparagine glycosylation sites follow: Asn329, Asn370, and Asn380. 2 disulfide bridges follow: Cys363–Cys385 and Cys367–Cys373. The helical transmembrane segment at 430–450 (YVVIIVVVTVFIIAVLIFVAF) threads the bilayer. The Cytoplasmic segment spans residues 451-821 (RIHKRKKMIL…LSAVRLSGPR (371 aa)). A Protein kinase domain is found at 493–768 (NNFSVKLGQG…KVVQMLEGVF (276 aa)). ATP-binding positions include 499-507 (LGQGGFGSV) and Lys521. The caM-binding stretch occupies residues 581 to 599 (KDGDVLLDWDTRFNIALGT). Asp618 (proton acceptor) is an active-site residue. A Phosphoserine modification is found at Ser635. A Phosphothreonine modification is found at Thr652.

This sequence belongs to the protein kinase superfamily. Ser/Thr protein kinase family. Interacts with PUB9, PUB13, PUB14 and PUB29.

The protein localises to the membrane. The enzyme catalyses L-seryl-[protein] + ATP = O-phospho-L-seryl-[protein] + ADP + H(+). It catalyses the reaction L-threonyl-[protein] + ATP = O-phospho-L-threonyl-[protein] + ADP + H(+). In Arabidopsis thaliana (Mouse-ear cress), this protein is G-type lectin S-receptor-like serine/threonine-protein kinase SD2-5 (SD25).